We begin with the raw amino-acid sequence, 341 residues long: HTH-type sugar sensing transcriptional regulator TrmBL1 (341 aa).

The H-T-H motif DNA-binding region spans 32 to 53 (SKATDVTKESGIPHTRIYDVLS).

The protein belongs to the transcriptional regulator TrmB family. Homotetramer. Forms homooctamers in the presence of maltotriose or maltose.

Its activity is regulated as follows. Repressor activity is regulated by binding of different sugars to TrmBL1. Binding of maltose and maltotriose results in derepression of the target genes. However, high sugar concentration results in formation of octamers with high affinity for DNA, which may prevent transcription of target genes. Functionally, global transcriptional repressor of the maltodextrin transport gene cluster (mdxE operon) and most likely of all genes encoding glycolytic enzymes. Acts by binding to the conserved TGM (Thermococcales-Glycolytic-Motif) sequences in their promoter region. Can also interact with non-TGM sequences. This chain is HTH-type sugar sensing transcriptional regulator TrmBL1 (trmBL1), found in Pyrococcus furiosus (strain ATCC 43587 / DSM 3638 / JCM 8422 / Vc1).